The following is a 301-amino-acid chain: Hydroxyquinol 1,2-dioxygenase (301 aa).

Positions 169, 202, 226, and 228 each coordinate Fe cation.

It belongs to the intradiol ring-cleavage dioxygenase family. Requires Fe(3+) as cofactor.

The catalysed reaction is benzene-1,2,4-triol + O2 = maleylacetate + 2 H(+). It functions in the pathway aromatic compound metabolism. Involved in resorcinol degradation. Catalyzes the conversion of hydroxyquinol to malelylacetate. Also shows weak activity with catechol, 3-methylcatechol and 4-methylcatechol, but cannot use 4-chlorocatechol, 4-nitrocatechol or protocatechuate. This is Hydroxyquinol 1,2-dioxygenase from Corynebacterium glutamicum (strain ATCC 13032 / DSM 20300 / JCM 1318 / BCRC 11384 / CCUG 27702 / LMG 3730 / NBRC 12168 / NCIMB 10025 / NRRL B-2784 / 534).